We begin with the raw amino-acid sequence, 296 residues long: MSQPVKQTDFPGLKLVNRGKVRDIYDLGDALLMVTSDRISAFDVIMNEPIPDKGKVLTQISKFWFSQMEDIIPNHIISTDVADYPAACQPYAEVLAGRSMLVKKAEPLAAECIVRGYVSGSGWKDYKATGSICGIKLPEGLKESDRLAEPIFTPSTKAELGTHDENISFDEMVKVCGKELAEQAREATIRIYCRAREIADQKGIIIADTKFEFGVYEGKLIIIDECLTPDSSRFWPKDQYQPGGPQPSFDKQFLRDYLETLDWGKTAPAPPLPEEIVTKTGEKYKEALFKLAGITV.

Belongs to the SAICAR synthetase family.

It catalyses the reaction 5-amino-1-(5-phospho-D-ribosyl)imidazole-4-carboxylate + L-aspartate + ATP = (2S)-2-[5-amino-1-(5-phospho-beta-D-ribosyl)imidazole-4-carboxamido]succinate + ADP + phosphate + 2 H(+). It functions in the pathway purine metabolism; IMP biosynthesis via de novo pathway; 5-amino-1-(5-phospho-D-ribosyl)imidazole-4-carboxamide from 5-amino-1-(5-phospho-D-ribosyl)imidazole-4-carboxylate: step 1/2. The sequence is that of Phosphoribosylaminoimidazole-succinocarboxamide synthase from Trichlorobacter lovleyi (strain ATCC BAA-1151 / DSM 17278 / SZ) (Geobacter lovleyi).